Consider the following 445-residue polypeptide: E3 ubiquitin-protein ligase MYLIP (445 aa).

Residues 1 to 279 (MLCYVTRPDA…ETHAFYRCDT (279 aa)) form the FERM domain. Fe cation-binding residues include C360, C363, and C368. Residues 387-422 (CMVCCEEEINSTFCPCGHTVCCESCAAQLQSCPVCR) form an RING-type zinc finger. The segment at 431-433 (VYL) is critical for homodimerization.

In terms of assembly, homodimer. Interacts with the E2 ubiquitin-conjugating enzyme, UBE2D1 (via RING-type zinc finger). Interacts with myosin regulatory light chain (MRLC) and TMEM4. Autoubiquitinated. Ubiquitously expressed.

It is found in the cytoplasm. The protein localises to the cell membrane. It catalyses the reaction S-ubiquitinyl-[E2 ubiquitin-conjugating enzyme]-L-cysteine + [acceptor protein]-L-lysine = [E2 ubiquitin-conjugating enzyme]-L-cysteine + N(6)-ubiquitinyl-[acceptor protein]-L-lysine.. It participates in protein modification; protein ubiquitination. Can bind 1 iron ion per dimer. Iron binding seems to decrease LDLR degradation activity. Functionally, E3 ubiquitin-protein ligase that mediates ubiquitination and subsequent proteasomal degradation of myosin regulatory light chain (MRLC), LDLR, VLDLR and LRP8. Activity depends on E2 enzymes of the UBE2D family. Proteasomal degradation of MRLC leads to inhibit neurite outgrowth in presence of NGF by counteracting the stabilization of MRLC by saposin-like protein (CNPY2/MSAP) and reducing CNPY2-stimulated neurite outgrowth. Acts as a sterol-dependent inhibitor of cellular cholesterol uptake by mediating ubiquitination and subsequent degradation of LDLR. The protein is E3 ubiquitin-protein ligase MYLIP (MYLIP) of Homo sapiens (Human).